The primary structure comprises 419 residues: Serine hydroxymethyltransferase (419 aa).

(6S)-5,6,7,8-tetrahydrofolate is bound by residues Leu-121 and 125-127 (GHL). Lys-229 is modified (N6-(pyridoxal phosphate)lysine).

Belongs to the SHMT family. Homodimer. The cofactor is pyridoxal 5'-phosphate.

The protein resides in the cytoplasm. The enzyme catalyses (6R)-5,10-methylene-5,6,7,8-tetrahydrofolate + glycine + H2O = (6S)-5,6,7,8-tetrahydrofolate + L-serine. It participates in one-carbon metabolism; tetrahydrofolate interconversion. Its pathway is amino-acid biosynthesis; glycine biosynthesis; glycine from L-serine: step 1/1. In terms of biological role, catalyzes the reversible interconversion of serine and glycine with tetrahydrofolate (THF) serving as the one-carbon carrier. This reaction serves as the major source of one-carbon groups required for the biosynthesis of purines, thymidylate, methionine, and other important biomolecules. Also exhibits THF-independent aldolase activity toward beta-hydroxyamino acids, producing glycine and aldehydes, via a retro-aldol mechanism. This is Serine hydroxymethyltransferase from Streptomyces griseus subsp. griseus (strain JCM 4626 / CBS 651.72 / NBRC 13350 / KCC S-0626 / ISP 5235).